The following is a 246-amino-acid chain: UDP-N-acetyl-D-mannosaminuronic acid transferase (246 aa).

The protein belongs to the glycosyltransferase 26 family.

The catalysed reaction is UDP-N-acetyl-alpha-D-mannosaminouronate + N-acetyl-alpha-D-glucosaminyl-di-trans,octa-cis-undecaprenyl diphosphate = beta-D-ManNAcA-(1-&gt;4)-alpha-D-GlcNAc-di-trans,octa-cis-undecaprenyl diphosphate + UDP + H(+). Its pathway is bacterial outer membrane biogenesis; enterobacterial common antigen biosynthesis. Catalyzes the synthesis of Und-PP-GlcNAc-ManNAcA (Lipid II), the second lipid-linked intermediate involved in enterobacterial common antigen (ECA) synthesis. The polypeptide is UDP-N-acetyl-D-mannosaminuronic acid transferase (Salmonella arizonae (strain ATCC BAA-731 / CDC346-86 / RSK2980)).